We begin with the raw amino-acid sequence, 146 residues long: UPF0178 protein BcerKBAB4_2842 (146 aa).

The protein belongs to the UPF0178 family.

The chain is UPF0178 protein BcerKBAB4_2842 from Bacillus mycoides (strain KBAB4) (Bacillus weihenstephanensis).